We begin with the raw amino-acid sequence, 565 residues long: Sulfite reductase [NADPH] hemoprotein beta-component (565 aa).

Positions 429, 435, 474, and 478 each coordinate [4Fe-4S] cluster. Residue C478 coordinates siroheme.

Belongs to the nitrite and sulfite reductase 4Fe-4S domain family. As to quaternary structure, alpha(8)-beta(8). The alpha component is a flavoprotein, the beta component is a hemoprotein. The cofactor is siroheme. [4Fe-4S] cluster is required as a cofactor.

It catalyses the reaction hydrogen sulfide + 3 NADP(+) + 3 H2O = sulfite + 3 NADPH + 4 H(+). It participates in sulfur metabolism; hydrogen sulfide biosynthesis; hydrogen sulfide from sulfite (NADPH route): step 1/1. Its function is as follows. Component of the sulfite reductase complex that catalyzes the 6-electron reduction of sulfite to sulfide. This is one of several activities required for the biosynthesis of L-cysteine from sulfate. The chain is Sulfite reductase [NADPH] hemoprotein beta-component from Shewanella loihica (strain ATCC BAA-1088 / PV-4).